Here is a 149-residue protein sequence, read N- to C-terminus: Transcriptional repressor NrdR (149 aa).

The segment at 3–34 (CPFCSATDTKVIDSRLVSDGHQVRRRRQCLAC) is a zinc-finger region. The ATP-cone domain maps to 49-139 (PKVIKSNGNR…VYRSFEDIKE (91 aa)).

This sequence belongs to the NrdR family. It depends on Zn(2+) as a cofactor.

In terms of biological role, negatively regulates transcription of bacterial ribonucleotide reductase nrd genes and operons by binding to NrdR-boxes. The polypeptide is Transcriptional repressor NrdR (Aliivibrio fischeri (strain ATCC 700601 / ES114) (Vibrio fischeri)).